The chain runs to 133 residues: p53 and DNA damage-regulated protein 1 (133 aa).

This sequence belongs to the prefoldin subunit beta family. Component of the PAQosome complex which is responsible for the biogenesis of several protein complexes and which consists of R2TP complex members RUVBL1, RUVBL2, RPAP3 and PIH1D1, URI complex members PFDN2, PFDN6, PDRG1, UXT and URI1 as well as ASDURF, POLR2E and DNAAF10/WDR92.

It is found in the cytoplasm. Its function is as follows. May play a role in chaperone-mediated protein folding. The protein is p53 and DNA damage-regulated protein 1 (Pdrg1) of Mus musculus (Mouse).